Consider the following 336-residue polypeptide: WAT1-related protein At2g37450 (336 aa).

Transmembrane regions (helical) follow at residues 7-27, 45-65, 79-99, 115-135, 160-180, 189-209, 227-247, 255-275, and 279-299; these read ALPFILMVLLQIGYAGMDILT, HGVATVVMAPFAFYFDNPVIA, TFAIALYNTLPAVTFILALIF, VVGTVTTVGGIMVMTLVKGPA, GAVLVTIGCFSYACFMILQAI, LSLATWICLIGTIEGVVVALV, LTITYSGIVCSALGYYIGGVV, FVTAFKPLCMIVVAIMSSIIF, and MYLGRALGATVICVGLYLVIW. EamA domains follow at residues 63–126 and 169–298; these read VIAQ…GGIM and FSYA…YLVI.

Belongs to the drug/metabolite transporter (DMT) superfamily. Plant drug/metabolite exporter (P-DME) (TC 2.A.7.4) family.

The protein localises to the membrane. This Arabidopsis thaliana (Mouse-ear cress) protein is WAT1-related protein At2g37450.